Consider the following 155-residue polypeptide: Ribonuclease H (155 aa).

The RNase H type-1 domain maps to 4–145; the sequence is ETKVIEIYTD…ADALARKAIT (142 aa). Mg(2+)-binding residues include Asp-13, Glu-51, Asp-73, and Asp-137.

Belongs to the RNase H family. Monomer. Mg(2+) serves as cofactor.

The protein localises to the cytoplasm. It carries out the reaction Endonucleolytic cleavage to 5'-phosphomonoester.. Its function is as follows. Endonuclease that specifically degrades the RNA of RNA-DNA hybrids. The polypeptide is Ribonuclease H (Bartonella bacilliformis (strain ATCC 35685 / KC583 / Herrer 020/F12,63)).